The chain runs to 81 residues: Protein Vpu (81 aa).

The Extracellular portion of the chain corresponds to 1–7 (MQPSQII). Residues 8-28 (AIAALVVAAIIAIVVWTIVFI) form a helical membrane-spanning segment. The Cytoplasmic segment spans residues 29-81 (EYRRIKRQRKIDCIIDRIRERAEDSGNESEGDREELSKLVEMGHHAPWDIDDL). Ser53 and Ser57 each carry phosphoserine; by host CK2.

It belongs to the HIV-1 VPU protein family. As to quaternary structure, homopentamer. Interacts with host CD4 and BRTC; these interactions induce proteasomal degradation of CD4. Interacts with host BST2; this interaction leads to the degradation of host BST2. Interacts with host FBXW11. Interacts with host AP1M1; this interaction plays a role in the mistrafficking and subsequent degradation of host BST2. Interacts with host RANBP2; this interaction allows Vpu to down-regulate host BLM sumoylation. Post-translationally, phosphorylated by host CK2. This phosphorylation is necessary for interaction with human BTRC and degradation of CD4.

Its subcellular location is the host membrane. Ion channel activity is inhibited by hexamethylene amiloride in vitro. Its function is as follows. Enhances virion budding by targeting host CD4 and Tetherin/BST2 to proteasome degradation. Degradation of CD4 prevents any unwanted premature interactions between viral Env and its host receptor CD4 in the endoplasmic reticulum. Degradation of antiretroviral protein Tetherin/BST2 is important for virion budding, as BST2 tethers new viral particles to the host cell membrane. Mechanistically, Vpu bridges either CD4 or BST2 to BTRC, a substrate recognition subunit of the Skp1/Cullin/F-box protein E3 ubiquitin ligase, induces their ubiquitination and subsequent proteasomal degradation. The alteration of the E3 ligase specificity by Vpu seems to promote the degradation of host IKBKB, leading to NF-kappa-B down-regulation and subsequent apoptosis. Acts as a viroporin that forms an oligomeric ion channel in membranes. Modulates the host DNA repair mechanisms to promote degradation of nuclear viral cDNA in cells that are already productively infected in order to suppress immune sensing and proviral hyper-integration (superinfection). Manipulates PML-NBs and modulates SUMOylation of host BLM protein thereby enhancing its DNA-end processing activity toward viral unintegrated linear DNA. Also inhibits RAD52-mediated homologous repair of viral cDNA, preventing the generation of dead-end circular forms of single copies of the long terminal repeat and permitting sustained nucleolytic attack. This Homo sapiens (Human) protein is Protein Vpu.